The following is a 78-amino-acid chain: Large ribosomal subunit protein bL28 (78 aa).

The tract at residues 1–21 (MSRVCQVTGKKPMVGNNRSHA) is disordered.

The protein belongs to the bacterial ribosomal protein bL28 family.

The sequence is that of Large ribosomal subunit protein bL28 from Shewanella piezotolerans (strain WP3 / JCM 13877).